Consider the following 334-residue polypeptide: Glycerol-3-phosphate dehydrogenase [NAD(P)+] (334 aa).

NADPH is bound by residues tryptophan 13, arginine 33, and lysine 106. Sn-glycerol 3-phosphate contacts are provided by lysine 106, glycine 137, and serine 139. Alanine 141 provides a ligand contact to NADPH. The sn-glycerol 3-phosphate site is built by lysine 192, aspartate 245, serine 255, arginine 256, and asparagine 257. Lysine 192 (proton acceptor) is an active-site residue. Arginine 256 serves as a coordination point for NADPH. NADPH is bound by residues valine 280 and glutamate 282.

It belongs to the NAD-dependent glycerol-3-phosphate dehydrogenase family.

The protein resides in the cytoplasm. The catalysed reaction is sn-glycerol 3-phosphate + NAD(+) = dihydroxyacetone phosphate + NADH + H(+). The enzyme catalyses sn-glycerol 3-phosphate + NADP(+) = dihydroxyacetone phosphate + NADPH + H(+). It functions in the pathway membrane lipid metabolism; glycerophospholipid metabolism. In terms of biological role, catalyzes the reduction of the glycolytic intermediate dihydroxyacetone phosphate (DHAP) to sn-glycerol 3-phosphate (G3P), the key precursor for phospholipid synthesis. This is Glycerol-3-phosphate dehydrogenase [NAD(P)+] from Chlamydia pneumoniae (Chlamydophila pneumoniae).